A 245-amino-acid polypeptide reads, in one-letter code: Anti-Pycsar protein Apyc1 (245 aa).

Residues 19 to 219 are beta-lactamase-like; that stretch reads FNNNALLYAG…EIQSQILLKH (201 aa). Zn(2+) contacts are provided by His61, His63, Asp65, His66, His145, Asp165, and His219.

The protein belongs to the anti-Pycsar protein Apyc1 family. In terms of assembly, homodimer. Zn(2+) is required as a cofactor.

It carries out the reaction 3',5'-cyclic CMP + H2O = CMP + H(+). It catalyses the reaction 3',5'-cyclic UMP + H2O = UMP + H(+). Counteracts the endogenous Pycsar antiviral defense system. Phosphodiesterase that enables metal-dependent hydrolysis of host cyclic nucleotide Pycsar defense signals such as cCMP and cUMP. This Paenibacillus sp. (strain J14) protein is Anti-Pycsar protein Apyc1.